The sequence spans 165 residues: Phosphopantetheine adenylyltransferase (165 aa).

Serine 9 contacts substrate. ATP contacts are provided by residues 9–10 (SF) and histidine 17. Substrate is bound by residues lysine 41, leucine 73, and lysine 87. ATP contacts are provided by residues 88-90 (GLR), glutamate 98, and 122-128 (YSFLSSS).

This sequence belongs to the bacterial CoaD family. In terms of assembly, homohexamer. It depends on Mg(2+) as a cofactor.

It is found in the cytoplasm. The catalysed reaction is (R)-4'-phosphopantetheine + ATP + H(+) = 3'-dephospho-CoA + diphosphate. The protein operates within cofactor biosynthesis; coenzyme A biosynthesis; CoA from (R)-pantothenate: step 4/5. Functionally, reversibly transfers an adenylyl group from ATP to 4'-phosphopantetheine, yielding dephospho-CoA (dPCoA) and pyrophosphate. This chain is Phosphopantetheine adenylyltransferase, found in Acidothermus cellulolyticus (strain ATCC 43068 / DSM 8971 / 11B).